A 262-amino-acid polypeptide reads, in one-letter code: Granzyme A (262 aa).

A signal peptide spans 1-26; that stretch reads MRNSYRFLASSLSVVVSLLLIPEDVC. A propeptide spans 27–28 (activation peptide); it reads EK. Residues 29–259 form the Peptidase S1 domain; the sequence is IIGGNEVTPH…HLNWIIMTIK (231 aa). Cys-54 and Cys-70 form a disulfide bridge. Residues His-69 and Asp-114 each act as charge relay system in the active site. 3 disulfide bridges follow: Cys-148/Cys-218, Cys-179/Cys-197, and Cys-208/Cys-234. A glycan (N-linked (GlcNAc...) asparagine) is linked at Asn-170. Ser-212 functions as the Charge relay system in the catalytic mechanism.

The protein belongs to the peptidase S1 family. Granzyme subfamily. As to quaternary structure, homodimer; disulfide-linked. Interacts with APEX1.

The protein localises to the secreted. It is found in the cytoplasmic granule. It carries out the reaction Hydrolysis of proteins, including fibronectin, type IV collagen and nucleolin. Preferential cleavage: -Arg-|-Xaa-, -Lys-|-Xaa- &gt;&gt; -Phe-|-Xaa- in small molecule substrates.. Its function is as follows. Abundant protease in the cytosolic granules of cytotoxic T-cells and NK-cells which activates caspase-independent pyroptosis when delivered into the target cell through the immunological synapse. It cleaves after Lys or Arg. Once delivered into the target cell, acts by catalyzing cleavage of gasdermin-B (GSDMB), releasing the pore-forming moiety of GSDMB, thereby triggering pyroptosis and target cell death. Cleaves APEX1 after 'Lys-31' and destroys its oxidative repair activity. Cleaves the nucleosome assembly protein SET after 'Lys-189', which disrupts its nucleosome assembly activity and allows the SET complex to translocate into the nucleus to nick and degrade the DNA. This chain is Granzyme A, found in Homo sapiens (Human).